Here is a 103-residue protein sequence, read N- to C-terminus: Large ribosomal subunit protein bL21 (103 aa).

It belongs to the bacterial ribosomal protein bL21 family. Part of the 50S ribosomal subunit. Contacts protein L20.

This protein binds to 23S rRNA in the presence of protein L20. In Ruminiclostridium cellulolyticum (strain ATCC 35319 / DSM 5812 / JCM 6584 / H10) (Clostridium cellulolyticum), this protein is Large ribosomal subunit protein bL21.